The chain runs to 550 residues: Formin-binding protein 1-like (550 aa).

The F-BAR domain occupies 1–263 (MSWGTELWDQ…AAKSVDERRD (263 aa)). 2 coiled-coil regions span residues 66-258 (FTSC…AKSV) and 334-426 (LEDF…QRSE). Positions 339 to 416 (HLPPEQRRKR…IHKNEAWLSE (78 aa)) constitute an REM-1 domain. Basic and acidic residues predominate over residues 423–432 (QRSERRHSAE). The tract at residues 423–467 (QRSERRHSAEANHLVAQGRESPEGSYTEDANQEGRVQPQPHAHPE) is disordered. One can recognise an SH3 domain in the interval 479–540 (PAIGHCKSLY…PTSYIDITLE (62 aa)).

Belongs to the FNBP1 family. Homodimerizes, the dimers can polymerize end-to-end to form filamentous structures. Interacts with GTP-bound cdc42 and wasl/n-wasp.

The protein localises to the cytoplasm. It localises to the cytoskeleton. Its subcellular location is the cell cortex. It is found in the cytoplasmic vesicle. The protein resides in the cell membrane. Required to coordinate membrane tubulation with reorganization of the actin cytoskeleton during endocytosis. Promotes cdc42-induced actin polymerization by activating the wasl-waspip complex, the predominant form of wasl/n-wasp in cells. Essential for autophagy of intracellular bacterial pathogens. The protein is Formin-binding protein 1-like (fnbp1l) of Xenopus tropicalis (Western clawed frog).